A 332-amino-acid polypeptide reads, in one-letter code: Phosphate acetyltransferase (332 aa).

The protein belongs to the phosphate acetyltransferase and butyryltransferase family.

Its subcellular location is the cytoplasm. The catalysed reaction is acetyl-CoA + phosphate = acetyl phosphate + CoA. It functions in the pathway metabolic intermediate biosynthesis; acetyl-CoA biosynthesis; acetyl-CoA from acetate: step 2/2. This chain is Phosphate acetyltransferase (pta), found in Acetivibrio thermocellus (strain ATCC 27405 / DSM 1237 / JCM 9322 / NBRC 103400 / NCIMB 10682 / NRRL B-4536 / VPI 7372) (Clostridium thermocellum).